Consider the following 545-residue polypeptide: MTFIKQMMPRYVASMTAGIVAAAMAATCAFAPVANADAVSPTQETIQSTGRHFMVYYRAWRDVTMKGVNTDLPDDNWISMYDIPYGVDVVNIFSYVPSGQEEQAQPFYDKLKSDYAPYLHSRGIKLVRGIDYTGVAVNGFRTFMKEQNKTESEATEADYDAYAKQVIDKYMISVGLDGLDIDMEAHPNDADVKISDNVIRALSKHIGPKSAKPDTTMFLYDTNGSYLNPFKNVAECFDYVAYQQYGSSSDRTARAAADYQPYIGNEFVPGLTFPEEGDMNNRWYDATEPYEESHFYQVASYVREHNLGGMFVYALDRDGRNYDEDLRRIVPSNLLWTKTAIAESEGMALDTAKTAANHYLDRMSLRQVIDDNAASADKARDMVGKAANLYETNKAVLGGDYGEGFSNTYDPTLEAGLLGIDISVLQQQIDKSSEIIGADTAESDAKTALRMARDAAIDGLTGKIYTADQVSAWSQALKAALDATVPVPTPDSTDQNGNRDKVTNHKVQGQPKQLSATGISTDIIVAVGVTLAIAGVALSLSRKLS.

The N-terminal stretch at 1-36 is a signal peptide; that stretch reads MTFIKQMMPRYVASMTAGIVAAAMAATCAFAPVANA. Positions 51 to 333 constitute a GH18 domain; it reads RHFMVYYRAW…EDLRRIVPSN (283 aa). The active-site Proton donor is Glu184. Residues 486–511 are disordered; the sequence is PVPTPDSTDQNGNRDKVTNHKVQGQP. Residues 518–538 traverse the membrane as a helical segment; that stretch reads GISTDIIVAVGVTLAIAGVAL.

The protein belongs to the glycosyl hydrolase 18 family.

Its subcellular location is the cell membrane. It catalyses the reaction an N(4)-(oligosaccharide-(1-&gt;3)-[oligosaccharide-(1-&gt;6)]-beta-D-Man-(1-&gt;4)-beta-D-GlcNAc-(1-&gt;4)-alpha-D-GlcNAc)-L-asparaginyl-[protein] + H2O = an oligosaccharide-(1-&gt;3)-[oligosaccharide-(1-&gt;6)]-beta-D-Man-(1-&gt;4)-D-GlcNAc + N(4)-(N-acetyl-beta-D-glucosaminyl)-L-asparaginyl-[protein]. In terms of biological role, endoglycosidase with broad specificity that cleaves the chitobiose core of high mannose and complex N-linked glycans. Is able to release N-glycans from diverse host glycoproteins such as human and bovine lactoferrin, immunoglobulins A and G, and ribonuclease B. Is active directly on human breast milk - a complex matrix of lipids, oligosaccharides, and proteins with disparate glycosylation types - successfully removing a significant proportion of the total amount of N-glycans. Does not recognize O-linked glycans or free human milk oligosaccharides (HMO). This is Endo-beta-N-acetylglucosaminidase from Bifidobacterium longum subsp. infantis (strain ATCC 15697 / DSM 20088 / JCM 1222 / NCTC 11817 / S12).